Consider the following 306-residue polypeptide: Ribonuclease BN (306 aa).

His-64, His-66, Asp-68, His-69, His-141, Asp-212, and His-270 together coordinate Zn(2+). Asp-68 functions as the Proton acceptor in the catalytic mechanism.

The protein belongs to the RNase Z family. RNase BN subfamily. As to quaternary structure, homodimer. The cofactor is Zn(2+).

Zinc phosphodiesterase, which has both exoribonuclease and endoribonuclease activities. This Klebsiella pneumoniae subsp. pneumoniae (strain ATCC 700721 / MGH 78578) protein is Ribonuclease BN.